The following is a 138-amino-acid chain: Cysteine desulfuration protein SufE (138 aa).

The active-site Cysteine persulfide intermediate is cysteine 51.

This sequence belongs to the SufE family. As to quaternary structure, homodimer. Interacts with SufS.

The protein localises to the cytoplasm. It participates in cofactor biosynthesis; iron-sulfur cluster biosynthesis. Its function is as follows. Participates in cysteine desulfuration mediated by SufS. Cysteine desulfuration mobilizes sulfur from L-cysteine to yield L-alanine and constitutes an essential step in sulfur metabolism for biosynthesis of a variety of sulfur-containing biomolecules. Functions as a sulfur acceptor for SufS, by mediating the direct transfer of the sulfur atom from the S-sulfanylcysteine of SufS, an intermediate product of cysteine desulfuration process. The polypeptide is Cysteine desulfuration protein SufE (Klebsiella pneumoniae subsp. pneumoniae (strain ATCC 700721 / MGH 78578)).